A 206-amino-acid polypeptide reads, in one-letter code: Small ribosomal subunit protein uS4 (206 aa).

Positions C96–V156 constitute an S4 RNA-binding domain.

Belongs to the universal ribosomal protein uS4 family. Part of the 30S ribosomal subunit. Contacts protein S5. The interaction surface between S4 and S5 is involved in control of translational fidelity.

Its function is as follows. One of the primary rRNA binding proteins, it binds directly to 16S rRNA where it nucleates assembly of the body of the 30S subunit. In terms of biological role, with S5 and S12 plays an important role in translational accuracy. The sequence is that of Small ribosomal subunit protein uS4 from Pseudomonas fluorescens (strain ATCC BAA-477 / NRRL B-23932 / Pf-5).